We begin with the raw amino-acid sequence, 211 residues long: Nucleoside triphosphate pyrophosphatase (211 aa).

Asp75 serves as the catalytic Proton acceptor.

Belongs to the Maf family. Requires a divalent metal cation as cofactor.

It is found in the cytoplasm. The enzyme catalyses a ribonucleoside 5'-triphosphate + H2O = a ribonucleoside 5'-phosphate + diphosphate + H(+). It carries out the reaction a 2'-deoxyribonucleoside 5'-triphosphate + H2O = a 2'-deoxyribonucleoside 5'-phosphate + diphosphate + H(+). Functionally, nucleoside triphosphate pyrophosphatase. May have a dual role in cell division arrest and in preventing the incorporation of modified nucleotides into cellular nucleic acids. The chain is Nucleoside triphosphate pyrophosphatase from Prochlorococcus marinus (strain NATL2A).